A 360-amino-acid chain; its full sequence is Phosphoserine aminotransferase (360 aa).

Residue Arg-41 coordinates L-glutamate. 4 residues coordinate pyridoxal 5'-phosphate: Trp-101, Thr-152, Asp-172, and Gln-195. Lys-196 is modified (N6-(pyridoxal phosphate)lysine). Position 237-238 (237-238) interacts with pyridoxal 5'-phosphate; sequence NT.

The protein belongs to the class-V pyridoxal-phosphate-dependent aminotransferase family. SerC subfamily. Homodimer. Pyridoxal 5'-phosphate serves as cofactor.

Its subcellular location is the cytoplasm. The enzyme catalyses O-phospho-L-serine + 2-oxoglutarate = 3-phosphooxypyruvate + L-glutamate. It carries out the reaction 4-(phosphooxy)-L-threonine + 2-oxoglutarate = (R)-3-hydroxy-2-oxo-4-phosphooxybutanoate + L-glutamate. It participates in amino-acid biosynthesis; L-serine biosynthesis; L-serine from 3-phospho-D-glycerate: step 2/3. The protein operates within cofactor biosynthesis; pyridoxine 5'-phosphate biosynthesis; pyridoxine 5'-phosphate from D-erythrose 4-phosphate: step 3/5. In terms of biological role, catalyzes the reversible conversion of 3-phosphohydroxypyruvate to phosphoserine and of 3-hydroxy-2-oxo-4-phosphonooxybutanoate to phosphohydroxythreonine. This Burkholderia orbicola (strain MC0-3) protein is Phosphoserine aminotransferase.